A 326-amino-acid chain; its full sequence is Lipopolysaccharide heptosyltransferase 1 (326 aa).

Positions 187, 188, 192, 222, and 242 each coordinate ADP. The ADP-L-glycero-beta-D-manno-heptose site is built by Thr-187, Thr-188, Lys-192, Glu-222, Met-242, Asp-261, Thr-262, Gly-263, and His-266. 2 residues coordinate ADP: Thr-262 and Gly-263.

It belongs to the glycosyltransferase 9 family. Monomer.

The protein resides in the cell inner membrane. The enzyme catalyses an alpha-Kdo-(2-&gt;4)-alpha-Kdo-(2-&gt;6)-lipid A + ADP-L-glycero-beta-D-manno-heptose = an L-alpha-D-Hep-(1-&gt;5)-[alpha-Kdo-(2-&gt;4)]-alpha-Kdo-(2-&gt;6)-lipid A + ADP + H(+). It carries out the reaction alpha-Kdo-(2-&gt;4)-alpha-Kdo-(2-&gt;6)-lipid A (E. coli) + ADP-L-glycero-beta-D-manno-heptose = L-alpha-D-Hep-(1-&gt;5)-[alpha-Kdo-(2-&gt;4)]-alpha-Kdo-(2-&gt;6)-lipid A (E. coli) + ADP + H(+). Its pathway is bacterial outer membrane biogenesis; LPS core biosynthesis. Inhibited by ADP-L-glycero-beta-D-gluco-2-deoxy-2-fluoro-heptose (ADP-2F-heptose), a non-cleavable analog of the substrate ADP-L-glycero-beta-D-manno-heptose. In terms of biological role, glycosyltransferase involved in the biosynthesis of the core oligosaccharide region of lipopolysaccharide (LPS). Catalyzes the addition of the first heptose unit to one 3-deoxy-D-manno-octulosonic acid (Kdo) residue of the Kdo2-lipid A module. The chain is Lipopolysaccharide heptosyltransferase 1 from Escherichia coli O18:K1:H7 (strain RS218 / NMEC).